Here is a 253-residue protein sequence, read N- to C-terminus: ATP synthase subunit b 1 (253 aa).

A helical transmembrane segment spans residues 2 to 22; it reads LIDWFTVIAELVNFLILVWLL.

It belongs to the ATPase B chain family. In terms of assembly, F-type ATPases have 2 components, F(1) - the catalytic core - and F(0) - the membrane proton channel. F(1) has five subunits: alpha(3), beta(3), gamma(1), delta(1), epsilon(1). F(0) has four main subunits: a(1), b(2) and c(10-14). The alpha and beta chains form an alternating ring which encloses part of the gamma chain. F(1) is attached to F(0) by a central stalk formed by the gamma and epsilon chains, while a peripheral stalk is formed by the delta and b chains.

It localises to the cell inner membrane. F(1)F(0) ATP synthase produces ATP from ADP in the presence of a proton or sodium gradient. F-type ATPases consist of two structural domains, F(1) containing the extramembraneous catalytic core and F(0) containing the membrane proton channel, linked together by a central stalk and a peripheral stalk. During catalysis, ATP synthesis in the catalytic domain of F(1) is coupled via a rotary mechanism of the central stalk subunits to proton translocation. In terms of biological role, component of the F(0) channel, it forms part of the peripheral stalk, linking F(1) to F(0). This chain is ATP synthase subunit b 1, found in Prosthecochloris aestuarii (strain DSM 271 / SK 413).